The following is a 503-amino-acid chain: Glycerol kinase (503 aa).

T14 lines the ADP pocket. The ATP site is built by T14, T15, and S16. T14 serves as a coordination point for sn-glycerol 3-phosphate. ADP is bound at residue R18. Sn-glycerol 3-phosphate-binding residues include R84, E85, Y136, and D246. 5 residues coordinate glycerol: R84, E85, Y136, D246, and Q247. Positions 268 and 311 each coordinate ADP. ATP contacts are provided by T268, G311, Q315, and G412. Residues G412 and N416 each contribute to the ADP site.

This sequence belongs to the FGGY kinase family.

It catalyses the reaction glycerol + ATP = sn-glycerol 3-phosphate + ADP + H(+). The protein operates within polyol metabolism; glycerol degradation via glycerol kinase pathway; sn-glycerol 3-phosphate from glycerol: step 1/1. With respect to regulation, inhibited by fructose 1,6-bisphosphate (FBP). Functionally, key enzyme in the regulation of glycerol uptake and metabolism. Catalyzes the phosphorylation of glycerol to yield sn-glycerol 3-phosphate. The protein is Glycerol kinase of Haemophilus influenzae (strain PittEE).